The sequence spans 704 residues: Plasma membrane ATPase 2 (704 aa).

The chain crosses the membrane as a helical span at residues 1–16; sequence CSIAVGMIIEIIVMYP. The Extracellular segment spans residues 17-26; the sequence is IQHRKYRPGI. The helical transmembrane segment at 27–48 threads the bilayer; the sequence is DNLLVLLIGGIPIAMPTVLSVT. The Cytoplasmic segment spans residues 49-395; the sequence is MAIGSHRLAQ…TSRAIFQRMK (347 aa). The active-site 4-aspartylphosphate intermediate is Asp81. Mg(2+) is bound by residues Asp340 and Asp344. Residues 396–417 traverse the membrane as a helical segment; it reads NYTIYAVSITIRIVLGFMLLAL. Residues 418-422 lie on the Extracellular side of the membrane; that stretch reads IWKFD. A helical membrane pass occupies residues 423-445; it reads FPPFMVLIIAILNDGTIMTISKD. Topologically, residues 446–461 are cytoplasmic; that stretch reads RVKPSPLPDSWKLAEI. The helical transmembrane segment at 462-482 threads the bilayer; that stretch reads FTTGVVLGGYLAMMTVIFFWA. Over 483 to 507 the chain is Extracellular; sequence AYETQFFPRVFGVSTLQRTATDDFR. Residues 508–528 form a helical membrane-spanning segment; the sequence is KLASAIYLQVSTISQALIFVT. The Cytoplasmic portion of the chain corresponds to 529-540; the sequence is RSRSWSFVERPG. Residues 541–561 traverse the membrane as a helical segment; the sequence is LLLVVALIVAQLVATLIAVYA. The Extracellular portion of the chain corresponds to 562–570; sequence SWSFAAIEG. A helical transmembrane segment spans residues 571–591; sequence IGWGWAGVIWLYNLVFYFPLD. The Cytoplasmic portion of the chain corresponds to 592-704; sequence IIKFLIRYAL…IETIQQSYTV (113 aa).

This sequence belongs to the cation transport ATPase (P-type) (TC 3.A.3) family. Type IIIA subfamily. Possibly exists as a homodimer or a homotrimer.

Its subcellular location is the cell membrane. The catalysed reaction is ATP + H2O + H(+)(in) = ADP + phosphate + 2 H(+)(out). The plasma membrane ATPase of plants and fungi is a hydrogen ion pump. The proton gradient it generates drives the active transport of nutrients by H(+)-symport. The resulting external acidification and/or internal alkinization may mediate growth responses. This Solanum lycopersicum (Tomato) protein is Plasma membrane ATPase 2 (LHA2).